Here is a 227-residue protein sequence, read N- to C-terminus: E3 ubiquitin-protein ligase ZNRF1 (227 aa).

The segment at methionine 1 to arginine 38 is disordered. Glycine 2 carries the N-myristoyl glycine lipid modification. The required for endosomal and lysosomal localization and myristoylation stretch occupies residues glycine 2 to arginine 10. A phosphoserine mark is found at serine 50, serine 52, and serine 53. A disordered region spans residues arginine 77–glutamate 105. Tyrosine 103 is modified (phosphotyrosine). Phosphoserine is present on serine 123. Residues cysteine 184–proline 225 form an RING-type; atypical zinc finger.

As to quaternary structure, interacts with AKT1, GLUL and TUBB2A. Interacts with ZNRF2. Interacts (via its RING domain) with UBE2N. Interacts (when phosphorylated) with YWHAE. Post-translationally, N-myristoylation targets ZNRF1 to intracellular membranes. Phosphorylated by SRC at Tyr-103; leading to 'Lys-63'-linked ubiquitination of TLR3, lysosomal trafficking and degradation.

The protein localises to the endosome. It is found in the lysosome. The protein resides in the membrane. It localises to the cytoplasmic vesicle. Its subcellular location is the secretory vesicle. The protein localises to the synaptic vesicle membrane. It carries out the reaction S-ubiquitinyl-[E2 ubiquitin-conjugating enzyme]-L-cysteine + [acceptor protein]-L-lysine = [E2 ubiquitin-conjugating enzyme]-L-cysteine + N(6)-ubiquitinyl-[acceptor protein]-L-lysine.. It functions in the pathway protein modification; protein ubiquitination. E3 ubiquitin-protein ligase that plays a role in different processes including cell differentiation, receptor recycling or regulation of inflammation. Mediates the ubiquitination of AKT1 and GLUL, thereby playing a role in neuron cells differentiation. Plays a role in the establishment and maintenance of neuronal transmission and plasticity. Regulates Schwann cells differentiation by mediating ubiquitination of GLUL. Promotes neurodegeneration by mediating 'Lys-48'-linked polyubiquitination and subsequent degradation of AKT1 in axons: degradation of AKT1 prevents AKT1-mediated phosphorylation of GSK3B, leading to GSK3B activation and phosphorylation of DPYSL2/CRMP2 followed by destabilization of microtubule assembly in axons. Ubiquitinates the Na(+)/K(+) ATPase alpha-1 subunit/ATP1A1 and thereby influences its endocytosis and/or degradation. Controls ligand-induced EGFR signaling via mediating receptor ubiquitination and recruitment of the ESCRT machinery. Acts as a negative feedback mechanism controlling TLR3 trafficking by mediating TLR3 'Lys-63'-linked polyubiquitination to reduce type I IFN production. Modulates inflammation by promoting caveolin-1/CAV1 ubiquitination and degradation to regulate TLR4-activated immune response. This Bos taurus (Bovine) protein is E3 ubiquitin-protein ligase ZNRF1 (ZNRF1).